The primary structure comprises 279 residues: Histone chaperone ASF1 (279 aa).

The segment at methionine 1–lysine 143 is interaction with HIR1. The interaction with histone H3, histone H4, RAD53 and the RF-C complex stretch occupies residues methionine 1–asparagine 155. Residues glutamate 156–asparagine 279 form a disordered region. Residues glycine 168 to glycine 244 show a composition bias toward acidic residues. A coiled-coil region spans residues aspartate 192–valine 243. Composition is skewed to basic and acidic residues over residues serine 245–aspartate 254 and serine 269–asparagine 279.

It belongs to the ASF1 family. Interacts with histone H3/H4 heterodimers via both histone H3 and histone H4. Binds with higher affinity to H3/H4 heterodimers where histone H3 has been pre-acetylated on 'Lys-14'. Interacts with RAD53 and this may impair interaction with histones and chromatin assembly; the interaction is reduced upon activation of DNA damage or replication checkpoints which in turn promotes histone binding and chromatin assembly. Interacts with the CAC2 subunit of chromatin assembly factor 1 (CAF-1). Interacts with the HIR1, HIR2, HIR3 and HPC2 subunits of the HIR complex. Interacts with the RFC1, RFC2, RFC3, RFC4 and RFC5 subunits of the replication factor C (RF-C/RFC) complex; which may recruit this protein to DNA. Interacts with the SAS2, SAS4 and SAS5 subunits of the SAS/SAS-I complex. Interacts with the BDF1, BDF2, SPT15, TAF1 and TAF7 subunits of the TFIID complex. Interacts with RTT109 and VPS75; the interaction with RTT109 is direct.

It localises to the nucleus. In terms of biological role, histone chaperone that facilitates histone deposition and histone exchange and removal during nucleosome assembly and disassembly. Facilitates histone deposition through both replication-dependent and replication-independent chromatin assembly pathways. Cooperates with chromatin assembly factor 1 (CAF-1) to promote replication-dependent chromatin assembly and with the HIR complex to promote replication-independent chromatin assembly, which may occur during transcription and DNA repair. May be required for the maintenance of a subset of replication elongation factors, including DNA polymerase epsilon, the RFC complex and PCNA, at stalled replication forks. Also required for RTT109-dependent acetylation of histone H3 on 'Lys-9' and 'Lys-56'. Promotion of RTT109-mediated histone H3 'Lys-56' acetylation is dependent on interactions with histone H3 pre-acetylated on 'Lys-14'. The polypeptide is Histone chaperone ASF1 (Saccharomyces cerevisiae (strain ATCC 204508 / S288c) (Baker's yeast)).